Here is a 344-residue protein sequence, read N- to C-terminus: S-adenosylmethionine:tRNA ribosyltransferase-isomerase (344 aa).

This sequence belongs to the QueA family. As to quaternary structure, monomer.

It is found in the cytoplasm. The enzyme catalyses 7-aminomethyl-7-carbaguanosine(34) in tRNA + S-adenosyl-L-methionine = epoxyqueuosine(34) in tRNA + adenine + L-methionine + 2 H(+). The protein operates within tRNA modification; tRNA-queuosine biosynthesis. Transfers and isomerizes the ribose moiety from AdoMet to the 7-aminomethyl group of 7-deazaguanine (preQ1-tRNA) to give epoxyqueuosine (oQ-tRNA). The chain is S-adenosylmethionine:tRNA ribosyltransferase-isomerase from Pediococcus pentosaceus (strain ATCC 25745 / CCUG 21536 / LMG 10740 / 183-1w).